The primary structure comprises 86 residues: MKTLLLTLVVVTIVCLDLGYTLTCLNCPEMFCGKFQTCRNGEKICFKMLQQRRPFSLRYIRGCAATCPGTKPRDMVECCSTDRCNR.

Positions 1–21 (MKTLLLTLVVVTIVCLDLGYT) are cleaved as a signal peptide. Intrachain disulfides connect Cys-24/Cys-45, Cys-27/Cys-32, Cys-38/Cys-63, Cys-67/Cys-78, and Cys-79/Cys-84.

Belongs to the three-finger toxin family. Ancestral subfamily. Orphan group II sub-subfamily. In terms of tissue distribution, expressed by the venom gland.

The protein localises to the secreted. Functionally, binds with low affinity to muscular (alpha-1-beta-1-delta-epsilon/CHRNA1-CHRNB1-CHRND-CHRNE) and very low affinity to neuronal (alpha-7/CHRNA7) nicotinic acetylcholine receptor (nAChR). In Naja sputatrix (Malayan spitting cobra), this protein is Weak neurotoxin 8.